Here is a 539-residue protein sequence, read N- to C-terminus: Tripartite motif-containing protein 26 (539 aa).

Residues Cys16–Lys57 form an RING-type zinc finger. Residues Gln97 to Met138 form a B box-type zinc finger. 4 residues coordinate Zn(2+): Cys102, His105, Cys124, and His130. The stretch at Ile188 to Arg227 forms a coiled coil. In terms of domain architecture, B30.2/SPRY spans Arg295–Pro539. The interval Arg376–Cys437 is disordered. A compositionally biased stretch (acidic residues) spans Ser380 to Leu434.

This sequence belongs to the TRIM/RBCC family. In terms of assembly, interacts with TBK1; this interaction bridges together TBK1 and NEMO in order to activate TBK1. Interacts with INCA1. In terms of processing, autoubiquitinates upon viral infection. In turn, autoubiquitinated TRIM26 recruits NEMO and bridges TBK1-NEMO interaction.

It localises to the cytoplasm. Its subcellular location is the nucleus. It carries out the reaction S-ubiquitinyl-[E2 ubiquitin-conjugating enzyme]-L-cysteine + [acceptor protein]-L-lysine = [E2 ubiquitin-conjugating enzyme]-L-cysteine + N(6)-ubiquitinyl-[acceptor protein]-L-lysine.. Its function is as follows. E3 ubiquitin-protein ligase which regulates the IFN-beta production and antiviral response downstream of various DNA-encoded pattern-recognition receptors (PRRs). Also plays a central role in determining the response to different forms of oxidative stress by controlling levels of DNA glycosylases NEIL1, NEIL3 and NTH1 that are involved in repair of damaged DNA. Promotes nuclear IRF3 ubiquitination and proteasomal degradation. Bridges together TBK1 and NEMO during the innate response to viral infection leading to the activation of TBK1. Positively regulates LPS-mediated inflammatory innate immune response by catalyzing the 'Lys-11'-linked polyubiquitination of TAB1 to enhance its activation and subsequent NF-kappa-B and MAPK signaling. In a manner independent of its catalytic activity, inhibits WWP2, a SOX2-directed E3 ubiquitin ligase, and thus protects SOX2 from polyubiquitination and proteasomal degradation. Ubiquitinates the histone acetyltransferase protein complex component PHF20 and thereby triggers its degradation in the nucleus after its recruitment by the histone demethylase KDM6B, serving as a scaffold protein. Upon induction by TGF-beta, ubiquitinates the TFIID component TAF7 for proteasomal degradation. Induces ferroptosis by ubiquitinating SLC7A11, a critical protein for lipid reactive oxygen species (ROS) scavenging. Inhibits directly hepatitis B virus replication by mediating HBX ubiquitination and subsequent degradation. (Microbial infection) Promotes herpes simplex virus type 2/HHV-2 infection in vaginal epithelial cells by decreasing the nuclear localization of IRF3, the primary mediator of type I interferon activation. This Homo sapiens (Human) protein is Tripartite motif-containing protein 26 (TRIM26).